The following is a 185-amino-acid chain: MANAIIEKAKERMTQSHQSLAREFGGIRAGRANASLLDRVHVEYYGVETPLNQIASITIPEARVLLVTPFDKSSLKDIERALNASDLGITPANDGSVIRLVIPALTEETRRDLAKEVKKVGENAKVAVRNIRRDAMDEAKKQEKAKEITEDELKTLEKDIQKVTDDAVKHIDDMTANKEKELLEV.

Belongs to the RRF family.

It localises to the cytoplasm. In terms of biological role, responsible for the release of ribosomes from messenger RNA at the termination of protein biosynthesis. May increase the efficiency of translation by recycling ribosomes from one round of translation to another. This is Ribosome-recycling factor from Streptococcus pneumoniae (strain 70585).